The chain runs to 371 residues: Phosphate acyltransferase (371 aa).

This sequence belongs to the PlsX family. Homodimer. Probably interacts with PlsY.

Its subcellular location is the cytoplasm. It carries out the reaction a fatty acyl-[ACP] + phosphate = an acyl phosphate + holo-[ACP]. Its pathway is lipid metabolism; phospholipid metabolism. Its function is as follows. Catalyzes the reversible formation of acyl-phosphate (acyl-PO(4)) from acyl-[acyl-carrier-protein] (acyl-ACP). This enzyme utilizes acyl-ACP as fatty acyl donor, but not acyl-CoA. In Polaromonas sp. (strain JS666 / ATCC BAA-500), this protein is Phosphate acyltransferase.